The following is an 86-amino-acid chain: ATP synthase subunit c (86 aa).

The next 2 helical transmembrane spans lie at 8-28 and 66-86; these read VLAA…GAGI and GIYA…IGML.

The protein belongs to the ATPase C chain family. In terms of assembly, F-type ATPases have 2 components, F(1) - the catalytic core - and F(0) - the membrane proton channel. F(1) has five subunits: alpha(3), beta(3), gamma(1), delta(1), epsilon(1). F(0) has three main subunits: a(1), b(2) and c(10-14). The alpha and beta chains form an alternating ring which encloses part of the gamma chain. F(1) is attached to F(0) by a central stalk formed by the gamma and epsilon chains, while a peripheral stalk is formed by the delta and b chains.

It is found in the cell membrane. F(1)F(0) ATP synthase produces ATP from ADP in the presence of a proton or sodium gradient. F-type ATPases consist of two structural domains, F(1) containing the extramembraneous catalytic core and F(0) containing the membrane proton channel, linked together by a central stalk and a peripheral stalk. During catalysis, ATP synthesis in the catalytic domain of F(1) is coupled via a rotary mechanism of the central stalk subunits to proton translocation. Functionally, key component of the F(0) channel; it plays a direct role in translocation across the membrane. A homomeric c-ring of between 10-14 subunits forms the central stalk rotor element with the F(1) delta and epsilon subunits. The sequence is that of ATP synthase subunit c from Natranaerobius thermophilus (strain ATCC BAA-1301 / DSM 18059 / JW/NM-WN-LF).